A 229-amino-acid polypeptide reads, in one-letter code: Endo-1,4-beta-xylanase 1 (229 aa).

The signal sequence occupies residues 1-19 (MVAFSSLICALTSIASTLA). A propeptide spanning residues 20-51 (MPTGLEPESSVNVTERGMYDFVLGAHNDHRRR) is cleaved from the precursor. An N-linked (GlcNAc...) asparagine glycan is attached at asparagine 31. A GH11 domain is found at 42–228 (LGAHNDHRRR…GSGSASQSVS (187 aa)). Tyrosine 117 is a binding site for substrate. Residue glutamate 126 is the Nucleophile of the active site. 5 residues coordinate substrate: tyrosine 128, arginine 160, proline 164, glutamine 174, and tyrosine 209. Glutamate 215 acts as the Proton donor in catalysis.

It belongs to the glycosyl hydrolase 11 (cellulase G) family.

The protein localises to the secreted. The catalysed reaction is Endohydrolysis of (1-&gt;4)-beta-D-xylosidic linkages in xylans.. The protein operates within glycan degradation; xylan degradation. In terms of biological role, glycoside hydrolase involved in the hydrolysis of xylan, a major plant cell wall hemicellulose made up of 1,4-beta-linked D-xylopyranose residues. Catalyzes the endohydrolysis of the main-chain 1,4-beta-glycosidic bonds connecting the xylose subunits yielding various xylooligosaccharides and xylose. The protein is Endo-1,4-beta-xylanase 1 of Hypocrea jecorina (strain QM6a) (Trichoderma reesei).